We begin with the raw amino-acid sequence, 197 residues long: Phosphoheptose isomerase (197 aa).

The SIS domain maps to 36–197; sequence MVNALLNEGK…IDRQLFGSEE (162 aa). 51-53 serves as a coordination point for substrate; the sequence is NGG. The Zn(2+) site is built by His60 and Glu64. Residues Glu64, 93–94, 119–121, Ser124, and Gln174 contribute to the substrate site; these read ND and STS. Residues Gln174 and His182 each coordinate Zn(2+).

Belongs to the SIS family. GmhA subfamily. Homotetramer. Zn(2+) is required as a cofactor.

Its subcellular location is the cytoplasm. The catalysed reaction is 2 D-sedoheptulose 7-phosphate = D-glycero-alpha-D-manno-heptose 7-phosphate + D-glycero-beta-D-manno-heptose 7-phosphate. Its pathway is carbohydrate biosynthesis; D-glycero-D-manno-heptose 7-phosphate biosynthesis; D-glycero-alpha-D-manno-heptose 7-phosphate and D-glycero-beta-D-manno-heptose 7-phosphate from sedoheptulose 7-phosphate: step 1/1. Functionally, catalyzes the isomerization of sedoheptulose 7-phosphate in D-glycero-D-manno-heptose 7-phosphate. The sequence is that of Phosphoheptose isomerase from Pseudomonas aeruginosa (strain LESB58).